Consider the following 379-residue polypeptide: Putative 2-hydroxyacid dehydrogenase YGL185C (379 aa).

NAD(+) is bound by residues 207 to 208 (SI), 291 to 293 (LGR), and Asp-317. Residue Arg-293 is part of the active site. Glu-322 is an active-site residue. The Proton donor role is filled by His-341. 341–344 (HLGS) contacts NAD(+).

It belongs to the D-isomer specific 2-hydroxyacid dehydrogenase family.

This chain is Putative 2-hydroxyacid dehydrogenase YGL185C, found in Saccharomyces cerevisiae (strain ATCC 204508 / S288c) (Baker's yeast).